The primary structure comprises 341 residues: Putative UPF0607 protein ENSP00000383783 (341 aa).

A compositionally biased stretch (basic and acidic residues) spans 75–101; it reads EVRAEEPKEATEVKDQVETQGQEDNKR. Disordered regions lie at residues 75–115 and 216–278; these read EVRA…TSSL and GLLM…PPPA. Positions 234-245 are enriched in low complexity; the sequence is SSRSSPSRAASH.

This sequence belongs to the UPF0607 family.

The sequence is that of Putative UPF0607 protein ENSP00000383783 from Homo sapiens (Human).